We begin with the raw amino-acid sequence, 294 residues long: tRNA pseudouridine synthase B (294 aa).

Aspartate 38 functions as the Nucleophile in the catalytic mechanism.

It belongs to the pseudouridine synthase TruB family. Type 1 subfamily.

It carries out the reaction uridine(55) in tRNA = pseudouridine(55) in tRNA. Functionally, responsible for synthesis of pseudouridine from uracil-55 in the psi GC loop of transfer RNAs. The protein is tRNA pseudouridine synthase B of Clostridium perfringens (strain SM101 / Type A).